A 2053-amino-acid chain; its full sequence is Cell adhesion molecule DSCAML1 (2053 aa).

Positions 1 to 18 (MWLVTFLLLLDSLHKARP) are cleaved as a signal peptide. Ig-like C2-type domains lie at 19–119 (EDVG…NIRI), 115–217 (PNIR…ARLS), 226–310 (PTIL…GILT), 314–396 (PLHV…QTAQ), 408–501 (PRIV…ARIN), 506–586 (PSIR…LSIS), 596–685 (PPLI…RQLI), 690–784 (PRFV…MFLT), and 788–885 (PAMI…LTVQ). Residues 19–1591 (EDVGTSLYFV…AQGEGDDVKK (1573 aa)) are Extracellular-facing. 7 disulfide bridges follow: C47/C103, C146/C198, C247/C294, C336/C386, C429/C485, C526/C575, and C617/C669. Residue N79 is glycosylated (N-linked (GlcNAc...) asparagine). N368 and N471 each carry an N-linked (GlcNAc...) asparagine glycan. 2 N-linked (GlcNAc...) asparagine glycosylation sites follow: N666 and N710. C711 and C767 form a disulfide bridge. N-linked (GlcNAc...) asparagine glycosylation occurs at N809. A disulfide bridge connects residues C810 and C867. Fibronectin type-III domains lie at 887 to 984 (PPDP…TEEA), 989 to 1088 (PPMD…TLED), 1093 to 1189 (PPEN…TKED), and 1193 to 1288 (PPAG…AGKA). N1144 and N1162 each carry an N-linked (GlcNAc...) asparagine glycan. The region spanning 1278–1377 (EKVTIEPAGK…TGGFDTIIVN (100 aa)) is the Ig-like C2-type 10 domain. C1311 and C1363 are joined by a disulfide. A glycan (N-linked (GlcNAc...) asparagine) is linked at N1345. 2 consecutive Fibronectin type-III domains span residues 1383-1477 (PPDQ…THGR) and 1478-1578 (EPSF…TIPP). N1561 carries N-linked (GlcNAc...) asparagine glycosylation. A helical membrane pass occupies residues 1592–1612 (LFTIGCPVILATLGVALLFVV). Residues 1613–2053 (RKKRKEKRLK…GAYSKSYTLV (441 aa)) lie on the Cytoplasmic side of the membrane. Disordered regions lie at residues 1716 to 1741 (LIDM…HSTR), 1773 to 1803 (HGVT…STES), 1840 to 1862 (SSDQ…STPS), and 1974 to 2053 (LAMP…YTLV). A compositionally biased stretch (basic residues) spans 1732–1741 (KNVKSAHSTR). Positions 1773 to 1789 (HGVTVTESDSYSASLSQ) are enriched in polar residues. Pro residues predominate over residues 1977 to 1993 (PAPPAGTAPPAPGPTPS).

In terms of assembly, homodimer; mediates homophilic interactions to promote cell adhesion. In terms of tissue distribution, in the retina, expressed in the rod photoreceptors, AII amacrine cells and rod bipolar cells (at protein level).

Its subcellular location is the cell membrane. It is found in the synapse. Its function is as follows. Cell adhesion molecule that plays a role in neuronal self-avoidance. Promotes repulsion between specific neuronal processes of either the same cell or the same subtype of cells. Promotes both isoneuronal self-avoidance for creating an orderly neurite arborization in retinal rod bipolar cells and heteroneuronal self-avoidance to maintain mosaic spacing between AII amacrine cells. Adhesion molecule that promotes lamina-specific synaptic connections in the retina: expressed in specific subsets of interneurons and retinal ganglion cells (RGCs) and promotes synaptic connectivity via homophilic interactions. This chain is Cell adhesion molecule DSCAML1 (Dscaml1), found in Mus musculus (Mouse).